An 819-amino-acid chain; its full sequence is Leucine--tRNA ligase (819 aa).

Residues 40–51 (PYPSGAGLHVGH) carry the 'HIGH' region motif. Residues 600-604 (KMSKS) carry the 'KMSKS' region motif. Residue Lys-603 participates in ATP binding.

Belongs to the class-I aminoacyl-tRNA synthetase family.

The protein localises to the cytoplasm. It carries out the reaction tRNA(Leu) + L-leucine + ATP = L-leucyl-tRNA(Leu) + AMP + diphosphate. The chain is Leucine--tRNA ligase from Chlamydia trachomatis serovar D (strain ATCC VR-885 / DSM 19411 / UW-3/Cx).